A 490-amino-acid polypeptide reads, in one-letter code: MAGRKENPVLTACQAPSGRITRAQAAANRGRFGFAPSVSLPARTERKQTAKGKTKRGALDEITSASTATSAPQPKRRTVLKDVTNIGCANSSKNCTTTSKLQQKSKPTQRVKQIPSKKQCAKKVPKLPPPAVAGTSFVIDSKSSEETQKVELLAKAEEPTNLFENEGLLSLQNIERNRDSNCHEAFFEARNAMDKHELADSKPGDSSGLGFIDIDNDNGNPQMCASYASEIYTNLMASELIRRPRSNYMEALQRDITKGMRGILIDWLVEVSEEYKLVPDTLYLTINLIDRFLSQHYIERQKLQLLGITSMLIASKYEEICAPRVEEFCFITDNTYTKAEVLKMEGLVLNDMGFHLSVPTTKTFLRRFLRAAQASRNVPSITLGYLANYLAELTLIDYSFLKFLPSVVAASAVFLARWTLDQSDIPWNHTLEHYTSYKSSDIQICVCALRELQHNTSNCPLNAIREKYRQQKFECVANLTSPELGQSLFS.

The interval 34 to 76 (FAPSVSLPARTERKQTAKGKTKRGALDEITSASTATSAPQPKR) is disordered. The segment covering 63-72 (TSASTATSAP) has biased composition (polar residues).

Belongs to the cyclin family. Cyclin AB subfamily.

The chain is Cyclin-A2-1 (CYCA2-1) from Oryza sativa subsp. japonica (Rice).